We begin with the raw amino-acid sequence, 72 residues long: Brevinin-2SN4 (72 aa).

The first 22 residues, 1-22 (MFTMKKPMLLLFFLGMISMSLC), serve as a signal peptide directing secretion. A propeptide spans 23-40 (QDERGADEDDGGEMTEEE) (removed in mature form). Residues cysteine 66 and cysteine 72 are joined by a disulfide bond.

Belongs to the frog skin active peptide (FSAP) family. Brevinin subfamily. Expressed by the skin glands.

The protein localises to the secreted. Antimicrobial peptide. Active against a variety of Gram-negative and Gram-positive bacterial strains. Not active against fungi. Shows very weak hemolytic activity against human erythrocytes. This Sylvirana spinulosa (Fine-spined frog) protein is Brevinin-2SN4.